Reading from the N-terminus, the 185-residue chain is Peroxynitrite isomerase (185 aa).

The tract at residues 1–21 (MHHPARELPFPDALRPGARPA) is disordered. Positions 34 to 40 (GTWRGTG) match the GXWXGXG motif. A heme b-binding site is contributed by H171.

The protein belongs to the nitrobindin family. Homodimer. Requires heme b as cofactor.

It catalyses the reaction peroxynitrite = nitrate. It participates in nitrogen metabolism. Functionally, heme-binding protein able to scavenge peroxynitrite and to protect free L-tyrosine against peroxynitrite-mediated nitration, by acting as a peroxynitrite isomerase that converts peroxynitrite to nitrate. Therefore, this protein likely plays a role in peroxynitrite sensing and in the detoxification of reactive nitrogen and oxygen species (RNS and ROS, respectively). Is able to bind nitric oxide (NO) in vitro, but may act as a sensor of peroxynitrite levels in vivo. The chain is Peroxynitrite isomerase from Streptomyces griseus subsp. griseus (strain JCM 4626 / CBS 651.72 / NBRC 13350 / KCC S-0626 / ISP 5235).